Here is a 242-residue protein sequence, read N- to C-terminus: 3-dehydroquinate dehydratase (242 aa).

3-dehydroquinate is bound by residues 39–41 (EIR) and Arg73. His135 (proton donor/acceptor) is an active-site residue. The Schiff-base intermediate with substrate role is filled by Lys162. The 3-dehydroquinate site is built by Arg203 and Gln228.

Belongs to the type-I 3-dehydroquinase family. In terms of assembly, homodimer.

It catalyses the reaction 3-dehydroquinate = 3-dehydroshikimate + H2O. It functions in the pathway metabolic intermediate biosynthesis; chorismate biosynthesis; chorismate from D-erythrose 4-phosphate and phosphoenolpyruvate: step 3/7. Involved in the third step of the chorismate pathway, which leads to the biosynthesis of aromatic amino acids. Catalyzes the cis-dehydration of 3-dehydroquinate (DHQ) and introduces the first double bond of the aromatic ring to yield 3-dehydroshikimate. This chain is 3-dehydroquinate dehydratase, found in Methanosarcina mazei (strain ATCC BAA-159 / DSM 3647 / Goe1 / Go1 / JCM 11833 / OCM 88) (Methanosarcina frisia).